The chain runs to 487 residues: UDP-N-acetylmuramoyl-L-alanyl-D-glutamate--2,6-diaminopimelate ligase (487 aa).

Positions 23 and 25 each coordinate UDP-N-acetyl-alpha-D-muramoyl-L-alanyl-D-glutamate. 108-114 (GTNGKTS) is an ATP binding site. UDP-N-acetyl-alpha-D-muramoyl-L-alanyl-D-glutamate contacts are provided by residues 150–151 (TT), S177, Q183, and R185. N6-carboxylysine is present on K217. Meso-2,6-diaminopimelate is bound by residues R378, 402 to 405 (DNPR), G453, and E457. The Meso-diaminopimelate recognition motif signature appears at 402 to 405 (DNPR).

The protein belongs to the MurCDEF family. MurE subfamily. Requires Mg(2+) as cofactor. In terms of processing, carboxylation is probably crucial for Mg(2+) binding and, consequently, for the gamma-phosphate positioning of ATP.

The protein localises to the cytoplasm. It carries out the reaction UDP-N-acetyl-alpha-D-muramoyl-L-alanyl-D-glutamate + meso-2,6-diaminopimelate + ATP = UDP-N-acetyl-alpha-D-muramoyl-L-alanyl-gamma-D-glutamyl-meso-2,6-diaminopimelate + ADP + phosphate + H(+). It functions in the pathway cell wall biogenesis; peptidoglycan biosynthesis. In terms of biological role, catalyzes the addition of meso-diaminopimelic acid to the nucleotide precursor UDP-N-acetylmuramoyl-L-alanyl-D-glutamate (UMAG) in the biosynthesis of bacterial cell-wall peptidoglycan. The polypeptide is UDP-N-acetylmuramoyl-L-alanyl-D-glutamate--2,6-diaminopimelate ligase (Ectopseudomonas mendocina (strain ymp) (Pseudomonas mendocina)).